The primary structure comprises 176 residues: Thiol-disulfide oxidoreductase ResA (176 aa).

Residues leucine 11 to phenylalanine 30 traverse the membrane as a helical; Signal-anchor for type II membrane protein segment. The 141-residue stretch at alanine 36–alanine 176 folds into the Thioredoxin domain. A disulfide bond links cysteine 74 and cysteine 77.

The protein belongs to the thioredoxin family. ResA subfamily.

It is found in the cell membrane. It participates in protein modification; cytochrome c assembly. Its function is as follows. Thiol-disulfide oxidoreductase which is required in disulfide reduction during c-type cytochrome synthesis. May accept reducing equivalents from CcdA, leading to breakage of disulfide bonds in apocytochrome c; following this reduction heme can be covalently attached. This Halalkalibacterium halodurans (strain ATCC BAA-125 / DSM 18197 / FERM 7344 / JCM 9153 / C-125) (Bacillus halodurans) protein is Thiol-disulfide oxidoreductase ResA.